Reading from the N-terminus, the 799-residue chain is 1,4-alpha-glucan-branching enzyme 2, chloroplastic/amyloplastic (799 aa).

Residues 1-57 constitute a chloroplast transit peptide; sequence MAFRVSGAVLGGAVRAPRLTGGGEGSLVFRHTGLFLTRGARVGCSGTHGAMRAAAAA. Residues W196 and K232 each contribute to the (1,4-alpha-D-glucosyl)n site. D447 acts as the Nucleophile in catalysis. E502 acts as the Proton donor in catalysis.

The protein belongs to the glycosyl hydrolase 13 family. GlgB subfamily. Monomer.

The protein resides in the plastid. It localises to the chloroplast. It is found in the amyloplast. It catalyses the reaction Transfers a segment of a (1-&gt;4)-alpha-D-glucan chain to a primary hydroxy group in a similar glucan chain.. It participates in glycan biosynthesis; starch biosynthesis. In terms of biological role, catalyzes the formation of the alpha-1,6-glucosidic linkages in starch by scission of a 1,4-alpha-linked oligosaccharide from growing alpha-1,4-glucan chains and the subsequent attachment of the oligosaccharide to the alpha-1,6 position. This chain is 1,4-alpha-glucan-branching enzyme 2, chloroplastic/amyloplastic (SBE1), found in Zea mays (Maize).